The following is a 350-amino-acid chain: S-adenosylmethionine:tRNA ribosyltransferase-isomerase (350 aa).

It belongs to the QueA family. As to quaternary structure, monomer.

The protein localises to the cytoplasm. It catalyses the reaction 7-aminomethyl-7-carbaguanosine(34) in tRNA + S-adenosyl-L-methionine = epoxyqueuosine(34) in tRNA + adenine + L-methionine + 2 H(+). Its pathway is tRNA modification; tRNA-queuosine biosynthesis. In terms of biological role, transfers and isomerizes the ribose moiety from AdoMet to the 7-aminomethyl group of 7-deazaguanine (preQ1-tRNA) to give epoxyqueuosine (oQ-tRNA). The chain is S-adenosylmethionine:tRNA ribosyltransferase-isomerase from Bacillus cereus (strain B4264).